The following is a 164-amino-acid chain: Protein SprT (164 aa).

Positions 14–156 (QLAESFFKRP…LCRRCRQTLV (143 aa)) constitute a SprT-like domain. H69 lines the Zn(2+) pocket. Residue E70 is part of the active site. H73 provides a ligand contact to Zn(2+).

This sequence belongs to the SprT family. It depends on Zn(2+) as a cofactor.

The protein resides in the cytoplasm. In Pseudomonas fluorescens (strain ATCC BAA-477 / NRRL B-23932 / Pf-5), this protein is Protein SprT.